The chain runs to 389 residues: Phospho-N-acetylmuramoyl-pentapeptide-transferase (389 aa).

10 consecutive transmembrane segments (helical) span residues 25-45, 73-93, 97-117, 135-155, 190-210, 222-242, 259-279, 287-307, 311-331, and 366-386; these read RAVMATITALLIGLVCGPAVI, TMGGVLILLGIAVATLLWADL, FIWIVMLVTFGFGVIGWVDDY, FWQSVIGLFAAVYLAFSVSEA, ISYPLGVWGFIVLTYLVIVGA, GLVIMPVVLVGASLGVFAYVM, AGELLIFCSAMGGAGLAFLWF, FMGDVGALALGGALGTVAVIV, IVLFIMGGIFVAETLSVMLQV, and QVVVRFWIITLMLCLFGLSTL.

The protein belongs to the glycosyltransferase 4 family. MraY subfamily. Requires Mg(2+) as cofactor.

The protein resides in the cell inner membrane. It carries out the reaction UDP-N-acetyl-alpha-D-muramoyl-L-alanyl-gamma-D-glutamyl-meso-2,6-diaminopimeloyl-D-alanyl-D-alanine + di-trans,octa-cis-undecaprenyl phosphate = di-trans,octa-cis-undecaprenyl diphospho-N-acetyl-alpha-D-muramoyl-L-alanyl-D-glutamyl-meso-2,6-diaminopimeloyl-D-alanyl-D-alanine + UMP. Its pathway is cell wall biogenesis; peptidoglycan biosynthesis. Functionally, catalyzes the initial step of the lipid cycle reactions in the biosynthesis of the cell wall peptidoglycan: transfers peptidoglycan precursor phospho-MurNAc-pentapeptide from UDP-MurNAc-pentapeptide onto the lipid carrier undecaprenyl phosphate, yielding undecaprenyl-pyrophosphoryl-MurNAc-pentapeptide, known as lipid I. The sequence is that of Phospho-N-acetylmuramoyl-pentapeptide-transferase from Paraburkholderia xenovorans (strain LB400).